We begin with the raw amino-acid sequence, 466 residues long: Glutamate decarboxylase (466 aa).

The residue at position 277 (Lys277) is an N6-(pyridoxal phosphate)lysine.

The protein belongs to the group II decarboxylase family. Requires pyridoxal 5'-phosphate as cofactor.

It catalyses the reaction L-glutamate + H(+) = 4-aminobutanoate + CO2. Its function is as follows. Converts internalized glutamate to GABA and increases the internal pH. Involved in glutamate-dependent acid resistance. The polypeptide is Glutamate decarboxylase (gadB) (Lactococcus lactis subsp. cremoris (strain MG1363)).